Reading from the N-terminus, the 289-residue chain is ATP synthase gamma chain (289 aa).

It belongs to the ATPase gamma chain family. As to quaternary structure, F-type ATPases have 2 components, CF(1) - the catalytic core - and CF(0) - the membrane proton channel. CF(1) has five subunits: alpha(3), beta(3), gamma(1), delta(1), epsilon(1). CF(0) has three main subunits: a, b and c.

It localises to the cell inner membrane. In terms of biological role, produces ATP from ADP in the presence of a proton gradient across the membrane. The gamma chain is believed to be important in regulating ATPase activity and the flow of protons through the CF(0) complex. This is ATP synthase gamma chain from Aromatoleum aromaticum (strain DSM 19018 / LMG 30748 / EbN1) (Azoarcus sp. (strain EbN1)).